Here is an 850-residue protein sequence, read N- to C-terminus: Translation initiation factor IF-2 (850 aa).

Disordered regions lie at residues 50-72 and 92-267; these read LKSS…KTTS and FVQR…TGPV. Residues 96 to 135 show a composition bias toward basic and acidic residues; that stretch reads SPEEIQAEQKREQEERRAAENAAREKADADARQRNEEQAR. A compositionally biased stretch (low complexity) spans 136–172; the sequence is RQAAQAPAAAPVAKAEPAPAAAAPAAPAVPDAPVSED. Basic and acidic residues-rich tracts occupy residues 173–210 and 234–243; these read AAAR…RGEA and TTDEESDGFR. Residues 244 to 257 show a composition bias toward basic residues; sequence RGRGGKGKPKKRNQ. Residues 350-517 enclose the tr-type G domain; it reads SRAPVVTVMG…AVLLQAEILE (168 aa). Residues 359–366 are G1; it reads GHVDHGKT. 359 to 366 lines the GTP pocket; the sequence is GHVDHGKT. The interval 384–388 is G2; the sequence is GITQH. The tract at residues 405–408 is G3; sequence DTPG. GTP contacts are provided by residues 405-409 and 459-462; these read DTPGH and NKID. The tract at residues 459–462 is G4; it reads NKID. The segment at 495 to 497 is G5; sequence SAK.

This sequence belongs to the TRAFAC class translation factor GTPase superfamily. Classic translation factor GTPase family. IF-2 subfamily.

Its subcellular location is the cytoplasm. Functionally, one of the essential components for the initiation of protein synthesis. Protects formylmethionyl-tRNA from spontaneous hydrolysis and promotes its binding to the 30S ribosomal subunits. Also involved in the hydrolysis of GTP during the formation of the 70S ribosomal complex. This is Translation initiation factor IF-2 from Pseudomonas entomophila (strain L48).